The sequence spans 178 residues: 2-C-methyl-D-erythritol 2,4-cyclodiphosphate synthase (178 aa).

Residues aspartate 24, histidine 26, and histidine 61 each coordinate a divalent metal cation. 24-26 contacts 4-CDP-2-C-methyl-D-erythritol 2-phosphate; the sequence is DSH. A 4-CDP-2-C-methyl-D-erythritol 2-phosphate-binding site is contributed by 150–153; the sequence is TSGE.

The protein belongs to the IspF family. As to quaternary structure, homotrimer. It depends on a divalent metal cation as a cofactor.

The enzyme catalyses 4-CDP-2-C-methyl-D-erythritol 2-phosphate = 2-C-methyl-D-erythritol 2,4-cyclic diphosphate + CMP. Its pathway is isoprenoid biosynthesis; isopentenyl diphosphate biosynthesis via DXP pathway; isopentenyl diphosphate from 1-deoxy-D-xylulose 5-phosphate: step 4/6. In terms of biological role, involved in the biosynthesis of isopentenyl diphosphate (IPP) and dimethylallyl diphosphate (DMAPP), two major building blocks of isoprenoid compounds. Catalyzes the conversion of 4-diphosphocytidyl-2-C-methyl-D-erythritol 2-phosphate (CDP-ME2P) to 2-C-methyl-D-erythritol 2,4-cyclodiphosphate (ME-CPP) with a corresponding release of cytidine 5-monophosphate (CMP). This chain is 2-C-methyl-D-erythritol 2,4-cyclodiphosphate synthase, found in Chlamydia trachomatis serovar L2 (strain ATCC VR-902B / DSM 19102 / 434/Bu).